A 770-amino-acid chain; its full sequence is Signal transducer and activator of transcription 3 (770 aa).

At alanine 2 the chain carries N-acetylalanine. N6-acetyllysine is present on residues lysine 49 and lysine 87. The short motif at 150-162 (DVRKRVQDLEQKM) is the Essential for nuclear import element. An SH2 domain is found at 580-670 (WNEGYIMGFI…DATNILVSPL (91 aa)). An allysine; alternate mark is found at lysine 601, lysine 615, and lysine 631. Residues lysine 601, lysine 615, and lysine 631 each carry the N6-acetyllysine; alternate modification. Tyrosine 640 is subject to Phosphotyrosine; by TYK2. Allysine; alternate is present on lysine 685. Lysine 685 carries the post-translational modification N6-acetyllysine; alternate. A Phosphotyrosine; by FER and PTK6 modification is found at tyrosine 705. The residue at position 707 (lysine 707) is an N6-acetyllysine. Phosphothreonine is present on threonine 714. Serine 727 carries the phosphoserine; by DYRK2, NLK, NEK6, IRAK1, RPS6KA5, ZIPK/DAPK3 and PKC/PRKCE modification.

This sequence belongs to the transcription factor STAT family. Forms a homodimer or a heterodimer with a related family member (at least STAT1). Component of a promoter-binding complex composed of STAT3, NFATC3 and NFATC4; complex formation is enhanced by calcineurin. Interacts with IL31RA, NCOA1, PELP1, SIPAR, SOCS7, STATIP1 and TMF1. Interacts with IL23R in presence of IL23. Interacts (via SH2 domain) with NLK. Interacts with ARL2BP; the interaction is enhanced by LIF and JAK1 expression. Interacts with KPNA4 and KPNA5; KPNA4 may be the primary mediator of nuclear import. Interacts with CAV2; the interaction is increased on insulin-induced tyrosine phosphorylation of CAV2 and leads to STAT3 activation. Interacts with ARL2BP; interaction is enhanced with ARL2. Interacts with NEK6. Binds to CDK9 when activated and nuclear. Interacts with BMX. Interacts with ZIPK/DAPK3. Interacts with PIAS3; the interaction occurs on stimulation by IL6, CNTF or OSM and inhibits the DNA binding activity of STAT3. In prostate cancer cells, interacts with PRKCE and promotes DNA binding activity of STAT3. Interacts with STMN3, antagonizing its microtubule-destabilizing activity. Interacts with the 'Lys-129' acetylated form of BIRC5/survivin. Interacts with FER. Interacts (via SH2 domain) with EIF2AK2/PKR (via the kinase catalytic domain). Interacts with FGFR4. Interacts with INPP5F; the interaction is independent of STAT3 Tyr-705 phosphorylation status. Interacts with OCIAD1. Interacts with OCIAD2. Interacts (unphosphorylated or phosphorylated at Ser-727) with PHB1. Interacts and may form heterodimers with NHLH1. Found in a complex with SLC39A6, SLC39A10 and with the 'Ser-727' phosphorylated form of STAT3 throughout mitosis. Interacts (when acetylated) with EP300 (via bromo domain); interaction takes place following STAT3 acetylation by EP300 and promotes enhanceosome assembly. Interacts (when acetylated) with BRD2 (via bromo domain); interaction promotes STAT3 recruitment to chromatin and T-helper Th17 cell differentiation. Interacts with FAM220A/SIPAR; the interaction occurs in both the nucleus and the cytoplasm, is enhanced by IL6 and promotes STAT3 dephosphorylation. Interacts in both unphosphorylated and phosphorylated forms with FAM220A but interacts preferentially in the phosphorylated form in the nucleus. Interacts with PTPN2; the interaction is promoted by FAM220A and leads to STAT3 dephosphorylation which negatively regulates STAT3 transcriptional activator activity. In terms of processing, activated through tyrosine phosphorylation by BMX. Tyrosine phosphorylated in response to IL6, IL11, CNTF, LIF, KITLG/SCF, CSF1, EGF, PDGF, IFN-alpha, LEP and OSM. Activated KIT promotes phosphorylation on tyrosine residues and subsequent translocation to the nucleus. Tyrosine phosphorylated in response to constitutively activated FGFR1, FGFR2, FGFR3 and FGFR4. Phosphorylated on serine upon DNA damage, probably by ATM or ATR. Serine phosphorylation is important for the formation of stable DNA-binding STAT3 homodimers and maximal transcriptional activity. ARL2BP may participate in keeping the phosphorylated state of STAT3 within the nucleus. Tyrosine phosphorylated upon stimulation with EGF. Upon LPS challenge, phosphorylated within the nucleus by IRAK1. Upon UV-A treatment, phosphorylated on Ser-727 by RPS6KA5. Dephosphorylation on tyrosine residues by PTPN2 negatively regulates IL6/interleukin-6 signaling. Phosphorylation at Tyr-705 by PTK6, isoform M2 of PKM (PKM2) or FER leads to an increase of its transcriptional activity. Phosphorylation at Tyr-705 is increased in the presence of calcineurin. Phosphorylation at Tyr-640 by TYK2 negatively regulates transcriptional activity. Post-translationally, acetylated on lysine residues by EP300/p300, promoting its activation. Acetylation at Lys-49 and Lys-87 by EP300/p300 promotes its activation. Acetylation at Lys-87 by EP300/p300 promotes its association with BRD2 and recruitment to chromatin. Deacetylated at Lys-49 and Lys-87 by HDAC1. Acetylation at Lys-685 by EP300/p300 promotes its homodimerization and activation. Deacetylated at Lys-685 by HDAC3. Acetylated on lysine residues by CREBBP. Deacetylation by LOXL3 leads to disrupt STAT3 dimerization and inhibit STAT3 transcription activity. Oxidation of lysine residues to allysine on STAT3 preferentially takes place on lysine residues that are acetylated. Some lysine residues are oxidized to allysine by LOXL3, leading to disrupt STAT3 dimerization and inhibit STAT3 transcription activity. Oxidation of lysine residues to allysine on STAT3 preferentially takes place on lysine residues that are acetylated. In terms of processing, (Microbial infection) Phosphorylated on Tyr-705 in the presence of S.typhimurium SarA. Expressed in ventricular cardiomyocytes (at protein level). Expressed in the lung (at protein level). Expressed in the liver, spleen and kidney. As to expression, expressed in the liver.

It localises to the cytoplasm. The protein localises to the nucleus. Functionally, signal transducer and transcription activator that mediates cellular responses to interleukins, KITLG/SCF, LEP and other growth factors. Once activated, recruits coactivators, such as NCOA1 or MED1, to the promoter region of the target gene. May mediate cellular responses to activated FGFR1, FGFR2, FGFR3 and FGFR4. Upon activation of IL6ST/gp130 signaling by interleukin-6 (IL6), binds to the IL6-responsive elements identified in the promoters of various acute-phase protein genes. Activated by IL31 through IL31RA. Acts as a regulator of inflammatory response by regulating differentiation of naive CD4(+) T-cells into T-helper Th17 or regulatory T-cells (Treg): acetylation promotes its transcription activity and cell differentiation while deacetylation and oxidation of lysine residues by LOXL3 inhibits differentiation. Involved in cell cycle regulation by inducing the expression of key genes for the progression from G1 to S phase, such as CCND1. Mediates the effects of LEP on melanocortin production, body energy homeostasis and lactation. May play an apoptotic role by transctivating BIRC5 expression under LEP activation. Cytoplasmic STAT3 represses macroautophagy by inhibiting EIF2AK2/PKR activity. Plays a crucial role in basal beta cell functions, such as regulation of insulin secretion. Following JAK/STAT signaling activation and as part of a complex with NFATC3 and NFATC4, binds to the alpha-beta E4 promoter region of CRYAB and activates transcription in cardiomyocytes. Plays an important role in host defense in methicillin-resistant S.aureus lung infection by regulating the expression of the antimicrobial lectin REG3G. This Mus musculus (Mouse) protein is Signal transducer and activator of transcription 3.